A 384-amino-acid polypeptide reads, in one-letter code: Alanine racemase (384 aa).

Catalysis depends on lysine 39, which acts as the Proton acceptor; specific for D-alanine. Residue lysine 39 is modified to N6-(pyridoxal phosphate)lysine. Arginine 136 serves as a coordination point for substrate. The active-site Proton acceptor; specific for L-alanine is tyrosine 265. Substrate is bound at residue methionine 312.

The protein belongs to the alanine racemase family. Pyridoxal 5'-phosphate is required as a cofactor.

The enzyme catalyses L-alanine = D-alanine. It participates in amino-acid biosynthesis; D-alanine biosynthesis; D-alanine from L-alanine: step 1/1. Catalyzes the interconversion of L-alanine and D-alanine. May also act on other amino acids. This is Alanine racemase (alr) from Geobacillus kaustophilus (strain HTA426).